We begin with the raw amino-acid sequence, 524 residues long: Zinc finger CCCH-type with G patch domain-containing protein (524 aa).

Residues 105–142 (SEESQPLGSNDETSTCSKGSEEEEEEEEEEEDNTSGMK) form a disordered region. A compositionally biased stretch (polar residues) spans 106–122 (EESQPLGSNDETSTCSK). Residues 125–137 (EEEEEEEEEEEDN) are compositionally biased toward acidic residues. The segment at 184–210 (KAMKPCPFFLDGKCLFNDNCRFSHGQV) adopts a C3H1-type zinc-finger fold. The interval 279–298 (RGSDSSSSSSSDEEEDGAAE) is disordered. Positions 326–372 (TRGIGSKLLVRMGYEFGKGLGRNAEGRVEPIQAVVLPKGKSLDQCME) constitute a G-patch domain. Disordered stretches follow at residues 375–402 (QRKK…GGAK) and 500–524 (GLQQ…MTEF). The segment covering 376 to 393 (RKKAGGKHKHKTSKRRPK) has biased composition (basic residues).

The protein localises to the nucleus. Its function is as follows. Transcription repressor that specifically binds the 5'-GGAG[GA]A[GA]A-3' consensus sequence. Represses transcription by recruiting the chromatin multiprotein complex NuRD to target promoters. Negatively regulates expression of EGFR, a gene involved in cell proliferation, survival and migration. The protein is Zinc finger CCCH-type with G patch domain-containing protein (zgpat) of Xenopus laevis (African clawed frog).